The sequence spans 350 residues: Ion-translocating oxidoreductase complex subunit D (350 aa).

Helical transmembrane passes span 20 to 40, 44 to 64, 68 to 88, 89 to 109, and 125 to 145; these read VMVLVILCLIPGVFLQSYFFG, LIQISLACLAALASEAFILKI, PVLNTLKDASALLTAILLAIS, IPPLAPWWIVVIGTIFAIIFV, and MAGYVLLLISFPVQMTSWLPV. Position 187 is an FMN phosphoryl threonine (threonine 187). Helical transmembrane passes span 215 to 235, 241 to 261, 267 to 287, 300 to 320, and 322 to 342; these read SWQQIYWINGAFLAGGLILLF, WHIPMSFLLGIGIFSFIAFAY, APPLFHLFSGATMLGAFFILS, ILYALLIAFIVVIIRNVGGYP, and AVAFAVLLGNMCVPLIDYYTQ.

The protein belongs to the NqrB/RnfD family. In terms of assembly, the complex is composed of six subunits: RnfA, RnfB, RnfC, RnfD, RnfE and RnfG. FMN serves as cofactor.

It localises to the cell inner membrane. Its function is as follows. Part of a membrane-bound complex that couples electron transfer with translocation of ions across the membrane. This is Ion-translocating oxidoreductase complex subunit D from Psychromonas ingrahamii (strain DSM 17664 / CCUG 51855 / 37).